A 352-amino-acid polypeptide reads, in one-letter code: Molybdenum import ATP-binding protein ModC (352 aa).

The region spanning 2–230 (MLEINVKKRL…PLFEPWQEQG (229 aa)) is the ABC transporter domain. 32-39 (GISGSGKS) is a binding site for ATP. The Mop domain maps to 290–352 (KTSIRNILSG…YAQIKAVSVM (63 aa)).

It belongs to the ABC transporter superfamily. Molybdate importer (TC 3.A.1.8) family. The complex is composed of two ATP-binding proteins (ModC), two transmembrane proteins (ModB) and a solute-binding protein (ModA).

The protein resides in the cell inner membrane. It catalyses the reaction molybdate(out) + ATP + H2O = molybdate(in) + ADP + phosphate + H(+). Its function is as follows. Part of the ABC transporter complex ModABC involved in molybdenum import. Responsible for energy coupling to the transport system. The protein is Molybdenum import ATP-binding protein ModC of Mannheimia succiniciproducens (strain KCTC 0769BP / MBEL55E).